We begin with the raw amino-acid sequence, 421 residues long: MASSSVPPATVSAATAGPGPGFGFASKTKKKHFVQQKVKVFRAADPLVGVFLWGVAHSINELSQVPPPVMLLPDDFKASSKIKVNNHLFHRENLPSHFKFKEYCPQVFRNLRDRFGIDDQDYLVSLTRNPPSESEGSDGRFLISYDRTLVIKEVSSEDIADMHSNLSNYHQYIVKCHGNTLLPQFLGMYRVSVDNEDSYMLVMRNMFSHRLPVHRKYDLKGSLVSREASDKEKVKELPTLKDMDFLNKNQKVYIGEEEKKIFLEKLKRDVEFLVQLKIMDYSLLLGIHDIIRGSEPEEEAPVREDESEVDGDCSLTGPPALVGSYGTSPEGIGGYIHSHRPLGPGEFESFIDVYAIRSAEGAPQKEVYFMGLIDILTQYDAKKKAAHAAKTVKHGAGAEISTVHPEQYAKRFLDFITNIFA.

Position 2 is an N-acetylalanine (Ala2). At Ser26 the chain carries Phosphoserine. Residues 43–420 (AADPLVGVFL…RFLDFITNIF (378 aa)) enclose the PIPK domain. A required for interaction with PIP5K1A region spans residues 69–75 (VMLLPDD). A Phosphoserine modification is found at Ser349.

As to quaternary structure, interacts with PIP5K1A; the interaction inhibits PIP5K1A kinase activity. Post-translationally, phosphorylated, phosphorylation is induced by EGF.

It localises to the endoplasmic reticulum. It is found in the cytoplasm. The enzyme catalyses a 1,2-diacyl-sn-glycero-3-phospho-(1D-myo-inositol-5-phosphate) + ATP = a 1,2-diacyl-sn-glycero-3-phospho-(1D-myo-inositol-4,5-bisphosphate) + ADP + H(+). It carries out the reaction 1,2-dihexadecanoyl-sn-glycero-3-phospho-(1D-myo-inositol-5-phosphate) + ATP = 1,2-dihexadecanoyl-sn-glycero-3-phospho-(1D-myo-inositol-4,5-bisphosphate) + ADP + H(+). The catalysed reaction is 1,2-dihexadecanoyl-sn-glycero-3-phospho-(1D-myo-inositol-5-phosphate) + GTP = 1,2-dihexadecanoyl-sn-glycero-3-phospho-(1D-myo-inositol-4,5-bisphosphate) + GDP + H(+). Its function is as follows. Phosphatidylinositol 5-phosphate 4-kinase with low enzymatic activity. May be a GTP sensor, has higher GTP-dependent kinase activity than ATP-dependent kinase activity. PIP4Ks negatively regulate insulin signaling through a catalytic-independent mechanism. They interact with PIP5Ks and suppress PIP5K-mediated PtdIns(4,5)P2 synthesis and insulin-dependent conversion to PtdIns(3,4,5)P3. This chain is Phosphatidylinositol 5-phosphate 4-kinase type-2 gamma, found in Homo sapiens (Human).